Consider the following 514-residue polypeptide: DNA-(apurinic or apyrimidinic site) endonuclease 2 (514 aa).

Mg(2+) contacts are provided by Asn8 and Glu48. Tyr156 is an active-site residue. Residues Asp197, Asn199, Asp303, and His304 each coordinate Mg(2+). The active-site Proton donor/acceptor is the Asp197. The Proton acceptor role is filled by His304. The segment at 359–417 is disordered; that stretch reads PSNQTQVHMRKNKARVRSTRSRPSKTGSSRGQKNLMSYFQPSSSGPQTSNLDLPSLGTL. The segment covering 366 to 381 has biased composition (basic residues); it reads HMRKNKARVRSTRSRP. A Glycyl lysine isopeptide (Lys-Gly) (interchain with G-Cter in ubiquitin) cross-link involves residue Lys371. Positions 382 to 410 are enriched in polar residues; the sequence is SKTGSSRGQKNLMSYFQPSSSGPQTSNLD. The tract at residues 390–397 is required for the interaction and colocalization with PCNA in nuclear foci in presence of oxidative-induced DNA damaging agents; it reads QKNLMSYF. Residues Cys465, His468, Cys491, and Cys505 each contribute to the Zn(2+) site. The segment at 465-514 adopts a GRF-type zinc-finger fold; it reads CGGHREPCVMRTVKKPGPNLGRHFYMCARPQGPPTDPSSRCNFFLWSRPS.

Belongs to the DNA repair enzymes AP/ExoA family. As to quaternary structure, interacts with PCNA; this interaction is triggered by reactive oxygen species and increased by misincorporation of uracil in nuclear DNA. Mg(2+) serves as cofactor. It depends on Mn(2+) as a cofactor. Ubiquitinated by the CUL9-RBX1 complex. Ubiquitinated by MKRN3 at Lys-371 leading to proteasomal degradation.

It is found in the nucleus. Its subcellular location is the cytoplasm. The protein resides in the mitochondrion. The catalysed reaction is Exonucleolytic cleavage in the 3'- to 5'-direction to yield nucleoside 5'-phosphates.. 3'-5' exonuclease activity is activated by sodium and manganese. 3'-5' exonuclease and 3'-phosphodiesterase activities are stimulated in presence of PCNA. Its function is as follows. Functions as a weak apurinic/apyrimidinic (AP) endodeoxyribonuclease in the DNA base excision repair (BER) pathway of DNA lesions induced by oxidative and alkylating agents. Initiates repair of AP sites in DNA by catalyzing hydrolytic incision of the phosphodiester backbone immediately adjacent to the damage, generating a single-strand break with 5'-deoxyribose phosphate and 3'-hydroxyl ends. Also displays double-stranded DNA 3'-5' exonuclease, 3'-phosphodiesterase activities. Shows robust 3'-5' exonuclease activity on 3'-recessed heteroduplex DNA and is able to remove mismatched nucleotides preferentially. Shows fairly strong 3'-phosphodiesterase activity involved in the removal of 3'-damaged termini formed in DNA by oxidative agents. In the nucleus functions in the PCNA-dependent BER pathway. Plays a role in reversing blocked 3' DNA ends, problematic lesions that preclude DNA synthesis. Required for somatic hypermutation (SHM) and DNA cleavage step of class switch recombination (CSR) of immunoglobulin genes. Required for proper cell cycle progression during proliferation of peripheral lymphocytes. This chain is DNA-(apurinic or apyrimidinic site) endonuclease 2 (APEX2), found in Bos taurus (Bovine).